The following is a 311-amino-acid chain: Succinate dehydrogenase [ubiquinone] iron-sulfur subunit 2, mitochondrial (311 aa).

Residues 1-63 (MILRRTLPRL…EEIRDHRRGD (63 aa)) constitute a mitochondrion transit peptide. Residues 1-70 (MILRRTLPRL…RGDAAAASPA (70 aa)) form a disordered region. Residues 51 to 63 (AKEEEIRDHRRGD) show a composition bias toward basic and acidic residues. A 2Fe-2S ferredoxin-type domain is found at 77–168 (FRVYRWSPDA…ATTVTPLPHM (92 aa)). Cys128, Cys133, and Cys148 together coordinate [2Fe-2S] cluster. The 4Fe-4S ferredoxin-type domain occupies 211–241 (ERKRLDGLYECILCACCSAACPSYWWNAEAF). [4Fe-4S] cluster is bound by residues Cys221, Cys224, and Cys227. Cys231 serves as a coordination point for [3Fe-4S] cluster. Trp236 provides a ligand contact to a ubiquinone. 2 residues coordinate [3Fe-4S] cluster: Cys279 and Cys285. Residue Cys289 participates in [4Fe-4S] cluster binding.

It belongs to the succinate dehydrogenase/fumarate reductase iron-sulfur protein family. In terms of assembly, component of complex II composed of eight subunits in plants: four classical SDH subunits SDH1, SDH2, SDH3 and SDH4 (a flavoprotein (FP), an iron-sulfur protein (IP), and a cytochrome b composed of a large and a small subunit.), as well as four subunits unknown in mitochondria from bacteria and heterotrophic eukaryotes. [2Fe-2S] cluster is required as a cofactor. [3Fe-4S] cluster serves as cofactor. It depends on [4Fe-4S] cluster as a cofactor.

The protein localises to the mitochondrion inner membrane. The enzyme catalyses a quinone + succinate = fumarate + a quinol. It participates in carbohydrate metabolism; tricarboxylic acid cycle; fumarate from succinate (eukaryal route): step 1/1. Functionally, iron-sulfur protein (IP) subunit of succinate dehydrogenase (SDH) that is involved in complex II of the mitochondrial electron transport chain and is responsible for transferring electrons from succinate to ubiquinone (coenzyme Q). The protein is Succinate dehydrogenase [ubiquinone] iron-sulfur subunit 2, mitochondrial of Oryza sativa subsp. japonica (Rice).